The primary structure comprises 497 residues: MTKYVLALDQGTTSSRAILFSREGDIIQISQKEFTQIYPQPGWVEHNANEIFDTESWGMRDCLKQAGIDGSQVVAAGITNQRETTVVWDKASGAPVYNAIVWQDRRTAGFCDELKARGLADTFRQKTGLVLDAYFSGTKVRWILENVPGARAKAEKGELLFGTIDTWLIWNLTKGKVHATDESNASRTLLFNINTGQWDDELLGILGVPRSMLPTVTRSSEVVGEIHPEFLGKAIPIAGNAGDQQAATYGNACLKPGMAKNTYGTGCFMLMNTGKEVHASKNNLLTTMAWATPSGRYFALEGSVFIAGAVVQWLRDGLGIIKDAPEVEQLALSVPDNGGVYLVPAFAGLGAPHWDQYARGTMVGITRGSTKAHIARAALESIALQTLDIMDCMQKDAGIKLAALRADGGATRNNLLMQFQADVLGVPVERPKVTETTALGAAYLAGLAVGFWKSEEEIEAMWQLDRRFEPNMSAETREKLVYDWQRAVERAKAWAQE.

Position 12 (threonine 12) interacts with ADP. The ATP site is built by threonine 12, threonine 13, and serine 14. Threonine 12 lines the sn-glycerol 3-phosphate pocket. Residue arginine 16 participates in ADP binding. Arginine 82, glutamate 83, tyrosine 134, and aspartate 243 together coordinate sn-glycerol 3-phosphate. Glycerol is bound by residues arginine 82, glutamate 83, tyrosine 134, aspartate 243, and glutamine 244. Residues threonine 265 and glycine 308 each contribute to the ADP site. Residues threonine 265, glycine 308, glutamine 312, and glycine 409 each coordinate ATP. Glycine 409 and asparagine 413 together coordinate ADP.

The protein belongs to the FGGY kinase family.

It carries out the reaction glycerol + ATP = sn-glycerol 3-phosphate + ADP + H(+). It participates in polyol metabolism; glycerol degradation via glycerol kinase pathway; sn-glycerol 3-phosphate from glycerol: step 1/1. Inhibited by fructose 1,6-bisphosphate (FBP). In terms of biological role, key enzyme in the regulation of glycerol uptake and metabolism. Catalyzes the phosphorylation of glycerol to yield sn-glycerol 3-phosphate. This is Glycerol kinase from Nitratidesulfovibrio vulgaris (strain DSM 19637 / Miyazaki F) (Desulfovibrio vulgaris).